The chain runs to 102 residues: Small ribosomal subunit protein uS10 (102 aa).

The protein belongs to the universal ribosomal protein uS10 family. Part of the 30S ribosomal subunit.

Its function is as follows. Involved in the binding of tRNA to the ribosomes. This chain is Small ribosomal subunit protein uS10, found in Rhodopseudomonas palustris (strain HaA2).